The sequence spans 240 residues: T-cell antigen CD7 (240 aa).

The signal sequence occupies residues 1-25 (MAGPPRLLLLPLLLALARGLPGALA). The 105-residue stretch at 26 to 130 (AQEVQQSPHC…NVYGSGTLVL (105 aa)) folds into the Ig-like domain. Over 26–180 (AQEVQQSPHC…PDPPAASALP (155 aa)) the chain is Extracellular. Intrachain disulfides connect cysteine 35-cysteine 142 and cysteine 48-cysteine 114. Asparagine 45 and asparagine 96 each carry an N-linked (GlcNAc...) asparagine glycan. The interval 140–172 (HRCSDAPPRASALPAPPTGSALPDPQTASALPD) is disordered. Tandem repeats lie at residues 145 to 153 (APPRASALP), 154 to 162 (APPTGSALP), 163 to 171 (DPQTASALP), and 172 to 180 (DPPAASALP). Positions 145–180 (APPRASALPAPPTGSALPDPQTASALPDPPAASALP) are 4 X 9 AA tandem repeats, potential spacer function. A helical membrane pass occupies residues 181–201 (AALAVISFLLGLGLGVACVLA). The S-palmitoyl cysteine moiety is linked to residue cysteine 198. The Cytoplasmic segment spans residues 202–240 (RTQIKKLCSWRDKNSAACVVYEDMSHSRCNTLSSPNQYQ).

As to quaternary structure, interacts with SECTM1. In terms of tissue distribution, expressed on T-cells and natural killer (NK) cells and their precursors.

It localises to the membrane. Functionally, transmembrane glycoprotein expressed by T-cells and natural killer (NK) cells and their precursors. Plays a costimulatory role in T-cell activation upon binding to its ligand K12/SECTM1. In turn, mediates the production of cytokines such as IL-2. On resting NK-cells, CD7 activation results in a significant induction of interferon-gamma levels. The chain is T-cell antigen CD7 (CD7) from Homo sapiens (Human).